Consider the following 121-residue polypeptide: Tachykinin-3 (121 aa).

The N-terminal stretch at 1-16 (MRIMLLFTAILAFSLA) is a signal peptide. Residues 17–78 (QSFGAVCKEP…TDPKESTSPE (62 aa)) constitute a propeptide that is removed on maturation. A Methionine amide modification is found at Met90. The interval 93–121 (RSVQPDSPTDVNQENVPSFGILKYPPRAE) is disordered. The propeptide occupies 94–121 (SVQPDSPTDVNQENVPSFGILKYPPRAE). Polar residues predominate over residues 96–108 (QPDSPTDVNQENV).

Belongs to the tachykinin family.

It localises to the secreted. Functionally, tachykinins are active peptides which excite neurons, evoke behavioral responses, are potent vasodilators and secretagogues, and contract (directly or indirectly) many smooth muscles. Is a critical central regulator of gonadal function. This chain is Tachykinin-3 (TAC3), found in Homo sapiens (Human).